A 350-amino-acid polypeptide reads, in one-letter code: Glycerol-3-phosphate dehydrogenase [NAD(+)], cytoplasmic (350 aa).

NAD(+)-binding positions include 11 to 16 (GSGNWG), Phe-98, Lys-121, and Ala-155. Lys-121 contributes to the substrate binding site. The Proton acceptor role is filled by Lys-206. NAD(+) is bound by residues Arg-270 and Gln-299. 270-271 (RN) is a binding site for substrate.

This sequence belongs to the NAD-dependent glycerol-3-phosphate dehydrogenase family. Homodimer.

It localises to the cytoplasm. The enzyme catalyses sn-glycerol 3-phosphate + NAD(+) = dihydroxyacetone phosphate + NADH + H(+). Its pathway is phospholipid metabolism; alpha-glycerophosphate cycle. The polypeptide is Glycerol-3-phosphate dehydrogenase [NAD(+)], cytoplasmic (Gpdh1) (Drosophila ezoana (Fruit fly)).